A 727-amino-acid chain; its full sequence is NADH-ubiquinone oxidoreductase 75 kDa subunit, mitochondrial (727 aa).

The N-terminal 23 residues, 1 to 23, are a transit peptide targeting the mitochondrion; sequence MLRIPIKRALIGLSNSPKGYVRT. A 2Fe-2S ferredoxin-type domain is found at 30–108; sequence NLIEVFVDGQ…GWNILTNSEK (79 aa). Residues Cys-64, Cys-75, and Cys-78 each contribute to the [2Fe-2S] cluster site. Lys-84 is modified (N6-acetyllysine). [2Fe-2S] cluster is bound at residue Cys-92. Residues 108-147 form the 4Fe-4S His(Cys)3-ligated-type domain; sequence KSKKAREGVMEFLLANHPLDCPICDQGGECDLQDQSMMFG. His-124, Cys-128, Cys-131, Cys-137, Cys-176, Cys-179, Cys-182, and Cys-226 together coordinate [4Fe-4S] cluster. In terms of domain architecture, 4Fe-4S Mo/W bis-MGD-type spans 245 to 301; that stretch reads TRKTESIDVMDAVGSNIVVSTRTGEVMRILPRMHEDINEEWISDKTRFAYDGLKRQR. A Phosphoserine modification is found at Ser-461. Lys-467, Lys-499, and Lys-709 each carry N6-acetyllysine.

This sequence belongs to the complex I 75 kDa subunit family. As to quaternary structure, core subunit of respiratory chain NADH dehydrogenase (Complex I) which is composed of 45 different subunits. This is the largest subunit of complex I and it is a component of the iron-sulfur (IP) fragment of the enzyme. Complex I associates with ubiquinol-cytochrome reductase complex (Complex III) to form supercomplexes. In astrocytes, less complex I is assembled into supercomplexes as compared to neurons. Interacts with MDM2. Interacts with AKAP1. [2Fe-2S] cluster is required as a cofactor. Requires [4Fe-4S] cluster as cofactor. Post-translationally, acetylation of Lys-84 is observed in liver mitochondria from fasted mice but not from fed mice. In terms of tissue distribution, brain. More abundant in neurons than in astrocytes (at protein level).

The protein localises to the mitochondrion inner membrane. The enzyme catalyses a ubiquinone + NADH + 5 H(+)(in) = a ubiquinol + NAD(+) + 4 H(+)(out). In terms of biological role, core subunit of the mitochondrial membrane respiratory chain NADH dehydrogenase (Complex I) which catalyzes electron transfer from NADH through the respiratory chain, using ubiquinone as an electron acceptor. Essential for catalysing the entry and efficient transfer of electrons within complex I. Plays a key role in the assembly and stability of complex I and participates in the association of complex I with ubiquinol-cytochrome reductase complex (Complex III) to form supercomplexes. The protein is NADH-ubiquinone oxidoreductase 75 kDa subunit, mitochondrial (Ndufs1) of Mus musculus (Mouse).